Here is a 142-residue protein sequence, read N- to C-terminus: Deoxyuridine 5'-triphosphate nucleotidohydrolase (142 aa).

Substrate contacts are provided by residues 62–64 (RSG), Asn-75, and 79–81 (TID).

Belongs to the dUTPase family. Requires Mg(2+) as cofactor.

It carries out the reaction dUTP + H2O = dUMP + diphosphate + H(+). It participates in pyrimidine metabolism; dUMP biosynthesis; dUMP from dCTP (dUTP route): step 2/2. This enzyme is involved in nucleotide metabolism: it produces dUMP, the immediate precursor of thymidine nucleotides and it decreases the intracellular concentration of dUTP so that uracil cannot be incorporated into DNA. This Trichodesmium erythraeum (strain IMS101) protein is Deoxyuridine 5'-triphosphate nucleotidohydrolase.